Reading from the N-terminus, the 415-residue chain is Serine hydroxymethyltransferase (415 aa).

Residues Leu115 and Gly119 to Leu121 each bind (6S)-5,6,7,8-tetrahydrofolate. N6-(pyridoxal phosphate)lysine is present on Lys224. Residue Ser348 to Phe350 coordinates (6S)-5,6,7,8-tetrahydrofolate.

It belongs to the SHMT family. In terms of assembly, homodimer. It depends on pyridoxal 5'-phosphate as a cofactor.

Its subcellular location is the cytoplasm. The enzyme catalyses (6R)-5,10-methylene-5,6,7,8-tetrahydrofolate + glycine + H2O = (6S)-5,6,7,8-tetrahydrofolate + L-serine. The protein operates within one-carbon metabolism; tetrahydrofolate interconversion. Its pathway is amino-acid biosynthesis; glycine biosynthesis; glycine from L-serine: step 1/1. Catalyzes the reversible interconversion of serine and glycine with tetrahydrofolate (THF) serving as the one-carbon carrier. This reaction serves as the major source of one-carbon groups required for the biosynthesis of purines, thymidylate, methionine, and other important biomolecules. Also exhibits THF-independent aldolase activity toward beta-hydroxyamino acids, producing glycine and aldehydes, via a retro-aldol mechanism. This Latilactobacillus sakei subsp. sakei (strain 23K) (Lactobacillus sakei subsp. sakei) protein is Serine hydroxymethyltransferase.